The primary structure comprises 375 residues: Anhydro-N-acetylmuramic acid kinase (375 aa).

13–20 (GTSMDGVD) is an ATP binding site.

Belongs to the anhydro-N-acetylmuramic acid kinase family.

It carries out the reaction 1,6-anhydro-N-acetyl-beta-muramate + ATP + H2O = N-acetyl-D-muramate 6-phosphate + ADP + H(+). It functions in the pathway amino-sugar metabolism; 1,6-anhydro-N-acetylmuramate degradation. Its pathway is cell wall biogenesis; peptidoglycan recycling. Its function is as follows. Catalyzes the specific phosphorylation of 1,6-anhydro-N-acetylmuramic acid (anhMurNAc) with the simultaneous cleavage of the 1,6-anhydro ring, generating MurNAc-6-P. Is required for the utilization of anhMurNAc either imported from the medium or derived from its own cell wall murein, and thus plays a role in cell wall recycling. In Pelagibacter ubique (strain HTCC1062), this protein is Anhydro-N-acetylmuramic acid kinase.